The chain runs to 214 residues: Probable nicotinate-nucleotide adenylyltransferase (214 aa).

It belongs to the NadD family.

The catalysed reaction is nicotinate beta-D-ribonucleotide + ATP + H(+) = deamido-NAD(+) + diphosphate. It participates in cofactor biosynthesis; NAD(+) biosynthesis; deamido-NAD(+) from nicotinate D-ribonucleotide: step 1/1. Functionally, catalyzes the reversible adenylation of nicotinate mononucleotide (NaMN) to nicotinic acid adenine dinucleotide (NaAD). The polypeptide is Probable nicotinate-nucleotide adenylyltransferase (Mycobacterium bovis (strain ATCC BAA-935 / AF2122/97)).